A 1153-amino-acid polypeptide reads, in one-letter code: Tyrosine-protein kinase JAK1 (1153 aa).

The region spanning 32 to 416 (KGLEIHFYLA…GYFRLTVDAH (385 aa)) is the FERM domain. Positions 435–540 (GCHGPICTEY…NLRFQLRRCC (106 aa)) constitute an SH2; atypical domain. 2 Protein kinase domains span residues 580 to 846 (IVQG…DIVM) and 872 to 1150 (LKKI…QQML). Residues 878 to 886 (LGEGHFGKV) and Lys-905 contribute to the ATP site. Asp-1000 serves as the catalytic Proton acceptor. Phosphotyrosine; by autocatalysis is present on residues Tyr-1031 and Tyr-1032.

Belongs to the protein kinase superfamily. Tyr protein kinase family. JAK subfamily. Mg(2+) is required as a cofactor.

Its subcellular location is the endomembrane system. It carries out the reaction L-tyrosyl-[protein] + ATP = O-phospho-L-tyrosyl-[protein] + ADP + H(+). Tyrosine kinase of the non-receptor type, involved in the IFN-alpha/beta/gamma signal pathway. Appears to be required in early development for specific cell migrations (epiboly), expression of homeobox protein goosecoid and formation of anterior structures. This Danio rerio (Zebrafish) protein is Tyrosine-protein kinase JAK1 (jak1).